Here is a 314-residue protein sequence, read N- to C-terminus: tRNA dimethylallyltransferase (314 aa).

Position 9 to 16 (9 to 16 (GPTAVGKT)) interacts with ATP. Residue 11-16 (TAVGKT) participates in substrate binding. The interval 34 to 37 (DSVQ) is interaction with substrate tRNA.

It belongs to the IPP transferase family. In terms of assembly, monomer. Requires Mg(2+) as cofactor.

The catalysed reaction is adenosine(37) in tRNA + dimethylallyl diphosphate = N(6)-dimethylallyladenosine(37) in tRNA + diphosphate. In terms of biological role, catalyzes the transfer of a dimethylallyl group onto the adenine at position 37 in tRNAs that read codons beginning with uridine, leading to the formation of N6-(dimethylallyl)adenosine (i(6)A). This Desulfitobacterium hafniense (strain Y51) protein is tRNA dimethylallyltransferase.